A 77-amino-acid chain; its full sequence is Ribonuclease P protein component 1 (77 aa).

Belongs to the eukaryotic/archaeal RNase P protein component 1 family. As to quaternary structure, consists of a catalytic RNA component and at least 4-5 protein subunits.

The protein resides in the cytoplasm. It catalyses the reaction Endonucleolytic cleavage of RNA, removing 5'-extranucleotides from tRNA precursor.. In terms of biological role, part of ribonuclease P, a protein complex that generates mature tRNA molecules by cleaving their 5'-ends. The chain is Ribonuclease P protein component 1 from Sulfurisphaera tokodaii (strain DSM 16993 / JCM 10545 / NBRC 100140 / 7) (Sulfolobus tokodaii).